The following is a 469-amino-acid chain: Glutamate--tRNA ligase (469 aa).

The 'HIGH' region signature appears at 9-19 (PSPTGFLHVGG). Residues C98, C100, C125, and D127 each coordinate Zn(2+). A 'KMSKS' region motif is present at residues 236–240 (KLSKR). Position 239 (K239) interacts with ATP.

The protein belongs to the class-I aminoacyl-tRNA synthetase family. Glutamate--tRNA ligase type 1 subfamily. As to quaternary structure, monomer. Zn(2+) is required as a cofactor.

It is found in the cytoplasm. It catalyses the reaction tRNA(Glu) + L-glutamate + ATP = L-glutamyl-tRNA(Glu) + AMP + diphosphate. Functionally, catalyzes the attachment of glutamate to tRNA(Glu) in a two-step reaction: glutamate is first activated by ATP to form Glu-AMP and then transferred to the acceptor end of tRNA(Glu). The sequence is that of Glutamate--tRNA ligase from Shewanella baltica (strain OS185).